A 213-amino-acid chain; its full sequence is Peroxynitrite isomerase 2 (213 aa).

The GXWXGXG signature appears at Gly-58–Gly-64. Positions 176 and 203 each coordinate heme b.

Belongs to the nitrobindin family. As to quaternary structure, homodimer. Heme b is required as a cofactor.

The enzyme catalyses peroxynitrite = nitrate. It functions in the pathway nitrogen metabolism. Functionally, heme-binding protein able to scavenge peroxynitrite and to protect free L-tyrosine against peroxynitrite-mediated nitration, by acting as a peroxynitrite isomerase that converts peroxynitrite to nitrate. Therefore, this protein likely plays a role in peroxynitrite sensing and in the detoxification of reactive nitrogen and oxygen species (RNS and ROS, respectively). Is able to bind nitric oxide (NO) in vitro, but may act as a sensor of peroxynitrite levels in vivo. The polypeptide is Peroxynitrite isomerase 2 (Rhodococcus jostii (strain RHA1)).